The following is a 260-amino-acid chain: Activator of 90 kDa heat shock protein ATPase homolog 2 (260 aa).

The protein belongs to the AHA1 family.

Co-chaperone that stimulates HSP90 ATPase activity. The polypeptide is Activator of 90 kDa heat shock protein ATPase homolog 2 (AHSA2) (Bos taurus (Bovine)).